The following is a 331-amino-acid chain: Lipoyl synthase (331 aa).

Residues 1–20 form a disordered region; the sequence is MTTETNPAVTPAYNPSEKQK. Residues Cys-71, Cys-76, Cys-82, Cys-97, Cys-101, Cys-104, and Ser-311 each contribute to the [4Fe-4S] cluster site. The 219-residue stretch at 82 to 300 folds into the Radical SAM core domain; sequence CFGKGTATFM…EEEAYKMGFA (219 aa).

It belongs to the radical SAM superfamily. Lipoyl synthase family. The cofactor is [4Fe-4S] cluster.

It is found in the cytoplasm. The enzyme catalyses [[Fe-S] cluster scaffold protein carrying a second [4Fe-4S](2+) cluster] + N(6)-octanoyl-L-lysyl-[protein] + 2 oxidized [2Fe-2S]-[ferredoxin] + 2 S-adenosyl-L-methionine + 4 H(+) = [[Fe-S] cluster scaffold protein] + N(6)-[(R)-dihydrolipoyl]-L-lysyl-[protein] + 4 Fe(3+) + 2 hydrogen sulfide + 2 5'-deoxyadenosine + 2 L-methionine + 2 reduced [2Fe-2S]-[ferredoxin]. The protein operates within protein modification; protein lipoylation via endogenous pathway; protein N(6)-(lipoyl)lysine from octanoyl-[acyl-carrier-protein]: step 2/2. Catalyzes the radical-mediated insertion of two sulfur atoms into the C-6 and C-8 positions of the octanoyl moiety bound to the lipoyl domains of lipoate-dependent enzymes, thereby converting the octanoylated domains into lipoylated derivatives. This Janthinobacterium sp. (strain Marseille) (Minibacterium massiliensis) protein is Lipoyl synthase.